The chain runs to 180 residues: Negative modulator of initiation of replication (180 aa).

3 interaction with DNA regions span residues 86 to 87 (AV), 115 to 119 (RTRVY), and 149 to 155 (NTNTGRK).

Belongs to the SeqA family. In terms of assembly, homodimer. Polymerizes to form helical filaments.

The protein resides in the cytoplasm. Negative regulator of replication initiation, which contributes to regulation of DNA replication and ensures that replication initiation occurs exactly once per chromosome per cell cycle. Binds to pairs of hemimethylated GATC sequences in the oriC region, thus preventing assembly of replication proteins and re-initiation at newly replicated origins. Repression is relieved when the region becomes fully methylated. The sequence is that of Negative modulator of initiation of replication from Salmonella typhimurium (strain LT2 / SGSC1412 / ATCC 700720).